The following is a 147-amino-acid chain: Large ribosomal subunit protein bL9 (147 aa).

The protein belongs to the bacterial ribosomal protein bL9 family.

Functionally, binds to the 23S rRNA. This is Large ribosomal subunit protein bL9 from Natranaerobius thermophilus (strain ATCC BAA-1301 / DSM 18059 / JW/NM-WN-LF).